The sequence spans 834 residues: MKRGRLPSSSEDSDDNGSLSTTWSQHSRSQHGRSSTCSRPEDRKPSEVFRTDLITAMKLHDSYQLNPDDYYVLADPWRQEWEKGVQVPVSPGTIPQPVARVVSEEKSLMFIRPKKYIASSGSEPPALGYVDIRTLADSVCRYDLNDMDAAWLEVTNEEFKEMGMPELDEYTMERVLEEFEQRCYDNMNHAIETEEGLGIEYDEDVVCDVCQSPDGEDGNEMVFCDKCNICVHQACYGILKVPEGSWLCRTCALGVQPKCLLCPKKGGAMKPTRSGTKWVHVSCALWIPEVSIGSPEKMEPITKVSHIPSSRWALVCSLCNEKFGASIQCSVKNCRTAFHVTCAFDRGLEMKTILAENDEVKFKSYCPKHSSHRKPEEGLGEGAAQENGAPESSPQSPLEPYGSLEPNREEAHRVSVRKQKLQQLEDEFYTFVNLLDVARALRLPEEVVDFLYQYWKLKRKINFNKPLITPKKDEEDNLAKREQDVLFRRLQLFTHLRQDLERVRNLTYMVTRREKIKRSVCKVQEQIFTQYTKLLEQEKVSGVPSSCSSALENMLFFNSPSVGPNAPKIEDLKWHSAFFRKQMGTSLVHPLKKSHKRDAVQNSSGTEGKTSHKQPGLCGRREGLEVSESLLSLEKTFAEARLLSSAQQKNGVVTPDHGKRRDNRFHCDLVKGDLKDKSFKQSHKPLRSTDTSQRHLDNTRAATSPGVGQSAPGTRKEIVPKCNGSLVKVPITPASPVKSWGGFRIPKKGERQQQGEAHDGACHQHSDCSHLGVSRAPAKERAKSRLRADSENDGYAPDGEMSDSESEASEKKCIHASSTISRRTDIIRRSILAS.

The disordered stretch occupies residues Met1 to Ser46. Residues Ser24–Ser35 are compositionally biased toward low complexity. The interval Asp61–Trp81 is interaction with KAT7/HBO1 and histones. Residues Trp81–His189 are interaction with histones. Ser90 bears the Phosphoserine mark. A Phosphothreonine modification is found at Thr93. Lys115 is covalently cross-linked (Glycyl lysine isopeptide (Lys-Gly) (interchain with G-Cter in SUMO2)). Residues Asp204 to Gly254 form a PHD-type 1 zinc finger. The segment at Gln256–Val290 adopts a C2HC pre-PHD-type zinc-finger fold. A PHD-type 2 zinc finger spans residues Leu314–Ser370. The tract at residues Pro367–Glu409 is disordered. Lys573 is covalently cross-linked (Glycyl lysine isopeptide (Lys-Gly) (interchain with G-Cter in SUMO2)). 2 disordered regions span residues His589–Arg621 and Asp676–Lys716. Ser603 bears the Phosphoserine mark. Lys609 carries the post-translational modification N6-acetyllysine. A phosphoserine mark is found at Ser704 and Ser735. Residues Lys738–Thr819 form a disordered region. Composition is skewed to basic and acidic residues over residues Lys747–Cys768 and Pro777–Ser790.

This sequence belongs to the JADE family. As to quaternary structure, component of the HBO1 complex composed at least of ING4 or ING5, KAT7/HBO1, MEAF6, and one of JADE1, JADE2 and JADE3. Interacts with NPHP4. In terms of tissue distribution, highly expressed in kidney. Also present in liver (at protein level).

The protein localises to the nucleus. It is found in the chromosome. Its subcellular location is the cytoplasm. The protein resides in the cytoskeleton. It localises to the cilium basal body. Functionally, scaffold subunit of some HBO1 complexes, which have a histone H4 acetyltransferase activity. Plays a key role in HBO1 complex by directing KAT7/HBO1 specificity towards histone H4 acetylation (H4K5ac, H4K8ac and H4K12ac), regulating DNA replication initiation, regulating DNA replication initiation. May also promote acetylation of nucleosomal histone H4 by KAT5. Promotes apoptosis. May act as a renal tumor suppressor. Negatively regulates canonical Wnt signaling; at least in part, cooperates with NPHP4 in this function. This is Protein Jade-1 (Jade1) from Mus musculus (Mouse).